Here is a 257-residue protein sequence, read N- to C-terminus: Phosphonates import ATP-binding protein PhnC (257 aa).

In terms of domain architecture, ABC transporter spans 4-248 (IEFKDVNKVY…VFNDIYGRKL (245 aa)). An ATP-binding site is contributed by 37–44 (GLSGAGKS).

It belongs to the ABC transporter superfamily. Phosphonates importer (TC 3.A.1.9.1) family. In terms of assembly, the complex is composed of two ATP-binding proteins (PhnC), two transmembrane proteins (PhnE) and a solute-binding protein (PhnD).

The protein resides in the cell membrane. The catalysed reaction is phosphonate(out) + ATP + H2O = phosphonate(in) + ADP + phosphate + H(+). In terms of biological role, part of the ABC transporter complex PhnCDE involved in phosphonates import. Responsible for energy coupling to the transport system. This Staphylococcus haemolyticus (strain JCSC1435) protein is Phosphonates import ATP-binding protein PhnC.